A 126-amino-acid chain; its full sequence is Type II methyltransferase M.HgiGI (126 aa).

Positions 1–126 (MKTIDLFAGC…ARLSKIHQQA (126 aa)) constitute an SAM-dependent MTase C5-type domain. C75 is a catalytic residue.

This sequence belongs to the class I-like SAM-binding methyltransferase superfamily. C5-methyltransferase family.

It carries out the reaction a 2'-deoxycytidine in DNA + S-adenosyl-L-methionine = a 5-methyl-2'-deoxycytidine in DNA + S-adenosyl-L-homocysteine + H(+). Functionally, a methylase, recognizes the double-stranded sequence 5'-GRCGYC-3', methylates C-? on both strands, and protects the DNA from cleavage by the HgiEI endonuclease. This Herpetosiphon aurantiacus (Herpetosiphon giganteus) protein is Type II methyltransferase M.HgiGI.